A 187-amino-acid chain; its full sequence is UPF0340 protein SP70585_0722 (187 aa).

The protein belongs to the UPF0340 family.

The chain is UPF0340 protein SP70585_0722 from Streptococcus pneumoniae (strain 70585).